A 1005-amino-acid chain; its full sequence is PDZ domain-containing protein 7 (1005 aa).

2 consecutive PDZ domains span residues 86–168 (SVRV…RMGR) and 210–293 (IVHL…ETGR). Disordered regions lie at residues 353–378 (PEEP…DAGG), 700–859 (VSPS…KTPS), and 949–1005 (VRVP…ARLL). Residues 770–786 (AQSRSRSRSRSRSRSRS) are compositionally biased toward basic residues. Positions 787 to 799 (SRGQGKSPGRRSP) are enriched in low complexity. The segment covering 989–998 (PEPPTNPQTP) has biased composition (pro residues).

As to quaternary structure, homodimerizes (via PDZ2 domain). Component of USH2 complex, composed of ADGRV1, PDZD7, USH2A and WHRN. Interacts (via PDZ domains) with WHRN; the interaction is direct. Interacts with USH1G. Interacts with ADGRV1 (via the cytoplasmic region). Interacts with USH2A (via the cytoplasmic region). Interacts with MYO7A (via MyTH4-FERM domains).

It localises to the cell projection. It is found in the cilium. The protein localises to the nucleus. The protein resides in the stereocilium. In terms of biological role, in cochlear developing hair cells, essential in organizing the USH2 complex at stereocilia ankle links. Blocks inhibition of adenylate cyclase activity mediated by ADGRV1. This chain is PDZ domain-containing protein 7 (PDZD7), found in Pongo abelii (Sumatran orangutan).